The sequence spans 35 residues: Photosystem II reaction center protein T (35 aa).

Residues Ala3–Phe23 form a helical membrane-spanning segment.

It belongs to the PsbT family. PSII is composed of 1 copy each of membrane proteins PsbA, PsbB, PsbC, PsbD, PsbE, PsbF, PsbH, PsbI, PsbJ, PsbK, PsbL, PsbM, PsbT, PsbY, PsbZ, Psb30/Ycf12, at least 3 peripheral proteins of the oxygen-evolving complex and a large number of cofactors. It forms dimeric complexes.

The protein localises to the plastid. Its subcellular location is the chloroplast thylakoid membrane. Functionally, found at the monomer-monomer interface of the photosystem II (PS II) dimer, plays a role in assembly and dimerization of PSII. PSII is a light-driven water plastoquinone oxidoreductase, using light energy to abstract electrons from H(2)O, generating a proton gradient subsequently used for ATP formation. The chain is Photosystem II reaction center protein T from Gossypium barbadense (Sea Island cotton).